The primary structure comprises 150 residues: Ventricular natriuretic peptide (150 aa).

The first 21 residues, 1 to 21, serve as a signal peptide directing secretion; sequence MAKSGIYLGCFILILIQNMVA. The tract at residues 52–75 is disordered; sequence EEPEVYPESEDMKMDAEEEDAGIS. Cysteine 120 and cysteine 136 are disulfide-bonded.

It belongs to the natriuretic peptide family. In terms of tissue distribution, heart ventricle, and to a lower extent in heart atrium.

The protein localises to the secreted. Its function is as follows. Exhibits natriuretic and vasodepressor activity. The polypeptide is Ventricular natriuretic peptide (vnp) (Anguilla japonica (Japanese eel)).